We begin with the raw amino-acid sequence, 586 residues long: Aspartate--tRNA(Asp/Asn) ligase (586 aa).

An L-aspartate-binding site is contributed by Glu-175. The segment at 199 to 202 is aspartate; the sequence is QIFK. Position 221 (Arg-221) interacts with L-aspartate. ATP is bound by residues 221 to 223 and Gln-230; that span reads RDE. Residue His-448 coordinates L-aspartate. Residue Glu-482 coordinates ATP. Arg-489 is an L-aspartate binding site. 534 to 537 is an ATP binding site; the sequence is GVDR.

It belongs to the class-II aminoacyl-tRNA synthetase family. Type 1 subfamily. In terms of assembly, homodimer.

It localises to the cytoplasm. It catalyses the reaction tRNA(Asx) + L-aspartate + ATP = L-aspartyl-tRNA(Asx) + AMP + diphosphate. Aspartyl-tRNA synthetase with relaxed tRNA specificity since it is able to aspartylate not only its cognate tRNA(Asp) but also tRNA(Asn). Reaction proceeds in two steps: L-aspartate is first activated by ATP to form Asp-AMP and then transferred to the acceptor end of tRNA(Asp/Asn). This chain is Aspartate--tRNA(Asp/Asn) ligase, found in Syntrophomonas wolfei subsp. wolfei (strain DSM 2245B / Goettingen).